The chain runs to 37 residues: Large ribosomal subunit protein bL36 (37 aa).

Belongs to the bacterial ribosomal protein bL36 family.

The chain is Large ribosomal subunit protein bL36 from Cyanothece sp. (strain PCC 7425 / ATCC 29141).